Reading from the N-terminus, the 199-residue chain is Prostatic spermine-binding protein (199 aa).

Residues 1-18 form the signal peptide; that stretch reads MLLLLTLAFLASPTCRAQ. The Jacalin-type lectin domain maps to 19 to 151; it reads NVLGNAAGKY…VRGIGFKWGN (133 aa). The N-linked (GlcNAc...) asparagine glycan is linked to asparagine 62. Positions 159–199 are disordered; the sequence is HYNNKEDKADNKDADNKDADNKDDGDEDDDGNDDDDQKDES. The segment covering 160–180 has biased composition (basic and acidic residues); sequence YNNKEDKADNKDADNKDADNK. Over residues 181 to 199 the composition is skewed to acidic residues; the sequence is DDGDEDDDGNDDDDQKDES.

To rat SBP. As to expression, prostate.

In terms of biological role, this protein seems to be functional equivalent to rat prostatic spermine-binding protein, which is involved in polyamine binding. The sequence is that of Prostatic spermine-binding protein (Sbp) from Mus musculus (Mouse).